Consider the following 349-residue polypeptide: Microbial Terpene synthase-like protein 1 (349 aa).

Mg(2+) contacts are provided by Asp98, Asp102, Asn243, and Ser247. A DDXXD motif motif is present at residues 98-102; it reads DDILD.

Belongs to the terpene synthase family. Mg(2+) serves as cofactor.

The protein operates within secondary metabolite biosynthesis; terpenoid biosynthesis. Its function is as follows. Sesquiterpene synthase converting farnesyl diphosphate to six sesquiterpenes, with beta-elemene, delta-cadinene and an unidentified oxygenated sesquiterpene as the major products. Has no diterpene synthase activity. The chain is Microbial Terpene synthase-like protein 1 from Selaginella moellendorffii (Spikemoss).